Consider the following 3147-residue polypeptide: Probable polyketide synthase 1 (3147 aa).

Positions 12 to 457 constitute a Ketosynthase family 3 (KS3) domain; it reads SSDVAVIGVG…GSNCHLIIQE (446 aa). Residues Cys-180 and His-319 each act as for beta-ketoacyl synthase activity in the active site. Residues 345 to 369 are disordered; sequence QLNNFSTDGNDNDDDDDDNTSPEPL. Over residues 354 to 364 the composition is skewed to acidic residues; that stretch reads NDNDDDDDDNT. Catalysis depends on His-380, which acts as the For beta-ketoacyl synthase activity. Residues 672-705 are acyl/malonyl transferase; it reads GIYPSISVGHSFGEVSSYYLSGIISLETACKIVY. The For acyl/malonyl transferase activity role is filled by Ser-682. The segment at 976–1127 is N-terminal hotdog fold; it reads NRLEGPTTSL…ATISLEQQQP (152 aa). Residues 976–1298 enclose the PKS/mFAS DH domain; that stretch reads NRLEGPTTSL…IKSTNPKSTK (323 aa). The active-site Proton acceptor; for dehydratase activity is the His-1014. The interval 1149-1298 is C-terminal hotdog fold; the sequence is DISKLDKFEL…IKSTNPKSTK (150 aa). Catalysis depends on Asp-1209, which acts as the Proton donor; for dehydratase activity. Positions 2568–2645 constitute a Carrier domain; the sequence is SSNISLQDKI…SFLEKVNGLS (78 aa). Ser-2605 bears the O-(pantetheine 4'-phosphoryl)serine mark. Residues 2723 to 2747 form a disordered region; sequence PSLSQSDVLKTPPIKSLNNTKNSSL. Over residues 2738–2747 the composition is skewed to polar residues; it reads SLNNTKNSSL. Residues 2789–3147 form a chalcone synthase region; the sequence is VLGIGISVPG…FEGCFLKNVV (359 aa). The active site involves Cys-2930.

This sequence in the C-terminal section; belongs to the thiolase-like superfamily. Chalcone/stilbene synthases family. In terms of assembly, homodimer. It depends on pantetheine 4'-phosphate as a cofactor.

It carries out the reaction (E)-4-coumaroyl-CoA + 3 malonyl-CoA + 3 H(+) = 2',4,4',6'-tetrahydroxychalcone + 3 CO2 + 4 CoA. It functions in the pathway secondary metabolite biosynthesis; flavonoid biosynthesis. Its function is as follows. Probable polyketide synthase. Produces only acylpyrones; in vitro. This chain is Probable polyketide synthase 1 (stlA), found in Dictyostelium discoideum (Social amoeba).